We begin with the raw amino-acid sequence, 777 residues long: Kelch domain-containing protein 7A (777 aa).

Residues 21–38 (VVLSAAALLLVTVAYRLY) form a helical membrane-spanning segment. The interval 43–207 (APAQRWGGNG…GLGQLEPPHC (165 aa)) is disordered. Ser86 carries the post-translational modification Phosphoserine. The segment covering 113–127 (TDRKPQRKGSGEERG) has biased composition (basic and acidic residues). Asn257 is a glycosylation site (N-linked (GlcNAc...) asparagine). Positions 313–359 (LTEVPSPRPPPGSLGTGAASGGQAGDTKGAAERAASPQTGPWPSTRG) are disordered. The span at 326–336 (LGTGAASGGQA) shows a compositional bias: gly residues. 5 Kelch repeats span residues 328 to 374 (TGAA…ENPE), 492 to 538 (QYLV…ICSL), 541 to 589 (YLFV…ALDG), 590 to 632 (HLYA…ATVR), and 635 to 677 (EIFV…AVNG). At Ser365 the chain carries Phosphoserine.

The protein resides in the membrane. The polypeptide is Kelch domain-containing protein 7A (KLHDC7A) (Homo sapiens (Human)).